A 101-amino-acid polypeptide reads, in one-letter code: Small ribosomal subunit protein eS24 (101 aa).

It belongs to the eukaryotic ribosomal protein eS24 family.

This Methanosarcina mazei (strain ATCC BAA-159 / DSM 3647 / Goe1 / Go1 / JCM 11833 / OCM 88) (Methanosarcina frisia) protein is Small ribosomal subunit protein eS24.